The sequence spans 211 residues: MRIRVKICGITRLEDAMAAVQHGADAIGFILWPQSERYISPEEAGRIVKCLPPFVRAVGVYVNPDKSWVEETSATAGLDLLQFHGDESADFCSRFHLPYIKAVRVRDGLDLLQYAQHYAGARGLLLDAYTAGIPGGTGHVFDWKLIPAELPLPWILSGGLHPGNITDAIGQTHLSAIDVSSGVEVAKGIKDVNKISAFMQRVRSCEDVRSS.

This sequence belongs to the TrpF family.

The catalysed reaction is N-(5-phospho-beta-D-ribosyl)anthranilate = 1-(2-carboxyphenylamino)-1-deoxy-D-ribulose 5-phosphate. It participates in amino-acid biosynthesis; L-tryptophan biosynthesis; L-tryptophan from chorismate: step 3/5. The polypeptide is N-(5'-phosphoribosyl)anthranilate isomerase (Nitrosomonas europaea (strain ATCC 19718 / CIP 103999 / KCTC 2705 / NBRC 14298)).